The sequence spans 660 residues: Peroxisomal acyl-coenzyme A oxidase 1 (660 aa).

Phosphoserine is present on Ser-26. N6-succinyllysine occurs at positions 89 and 90. FAD-binding residues include Thr-139 and Gly-178. Lys-216 is modified (N6-acetyllysine). Residue Lys-241 is modified to N6-succinyllysine. 3 positions are modified to N6-acetyllysine: Lys-255, Lys-267, and Lys-272. An N6-succinyllysine modification is found at Lys-349. The active-site Proton acceptor is the Glu-421. An N6-acetyllysine; alternate mark is found at Lys-437 and Lys-446. 2 positions are modified to N6-succinyllysine; alternate: Lys-437 and Lys-446. Lys-500 is modified (N6-acetyllysine). N6-acetyllysine; alternate is present on Lys-512. N6-succinyllysine; alternate is present on Lys-512. Residue Lys-542 is modified to N6-succinyllysine. Position 637 is an N6-acetyllysine; alternate (Lys-637). Residue Lys-637 is modified to N6-succinyllysine; alternate. An N6-succinyllysine modification is found at Lys-643. The residue at position 649 (Ser-649) is a Phosphoserine. Residue Lys-651 is modified to N6-acetyllysine. Lys-654 carries the post-translational modification N6-succinyllysine. The Microbody targeting signal motif lies at 658-660 (SKL).

Belongs to the acyl-CoA oxidase family. Homodimer. Interacts with LONP2. FAD serves as cofactor.

The protein localises to the peroxisome. It catalyses the reaction a 2,3-saturated acyl-CoA + O2 = a (2E)-enoyl-CoA + H2O2. The catalysed reaction is hexadecanoyl-CoA + O2 = (2E)-hexadecenoyl-CoA + H2O2. It carries out the reaction dodecanoyl-CoA + O2 = (2E)-dodecenoyl-CoA + H2O2. The enzyme catalyses octanoyl-CoA + O2 = (2E)-octenoyl-CoA + H2O2. It catalyses the reaction decanoyl-CoA + O2 = (2E)-decenoyl-CoA + H2O2. The catalysed reaction is tetradecanoyl-CoA + O2 = (2E)-tetradecenoyl-CoA + H2O2. It carries out the reaction hexadecanedioyl-CoA + O2 = (2E)-hexadecenedioyl-CoA + H2O2. The enzyme catalyses tetracosanoyl-CoA + O2 = (2E)-tetracosenoyl-CoA + H2O2. It catalyses the reaction glutaryl-CoA + O2 = (2E)-glutaconyl-CoA + H2O2. The catalysed reaction is hexanoyl-CoA + O2 = (2E)-hexenoyl-CoA + H2O2. It carries out the reaction octadecanoyl-CoA + O2 = (2E)-octadecenoyl-CoA + H2O2. The enzyme catalyses (5Z,8Z,11Z,14Z,17Z)-eicosapentaenoyl-CoA + O2 = (2E,5Z,8Z,11Z,14Z,17Z)-icosahexaenoyl-CoA + H2O2. It catalyses the reaction (6Z,9Z,12Z,15Z,18Z,21Z)-tetracosahexaenoyl-CoA + O2 = (2E,6Z,9Z,12Z,15Z,18Z,21Z)-tetracosaheptaenoyl-CoA + H2O2. Its pathway is lipid metabolism; peroxisomal fatty acid beta-oxidation. Involved in the initial and rate-limiting step of peroxisomal beta-oxidation of straight-chain saturated and unsaturated very-long-chain fatty acids. Catalyzes the desaturation of fatty acyl-CoAs such as palmitoyl-CoA (hexadecanoyl-CoA) to 2-trans-enoyl-CoAs ((2E)-enoyl-CoAs) such as (2E)-hexadecenoyl-CoA, and donates electrons directly to molecular oxygen (O(2)), thereby producing hydrogen peroxide (H(2)O(2)). Functionally, shows highest activity against medium-chain fatty acyl-CoAs. Shows optimum activity with a chain length of 10 carbons (decanoyl-CoA) in vitro. Its function is as follows. Is active against a much broader range of substrates and shows activity towards long-chain acyl-CoAs. The polypeptide is Peroxisomal acyl-coenzyme A oxidase 1 (Pongo abelii (Sumatran orangutan)).